Consider the following 120-residue polypeptide: Large ribosomal subunit protein uL22 (120 aa).

The protein belongs to the universal ribosomal protein uL22 family. Part of the 50S ribosomal subunit.

In terms of biological role, this protein binds specifically to 23S rRNA; its binding is stimulated by other ribosomal proteins, e.g. L4, L17, and L20. It is important during the early stages of 50S assembly. It makes multiple contacts with different domains of the 23S rRNA in the assembled 50S subunit and ribosome. Its function is as follows. The globular domain of the protein is located near the polypeptide exit tunnel on the outside of the subunit, while an extended beta-hairpin is found that lines the wall of the exit tunnel in the center of the 70S ribosome. The chain is Large ribosomal subunit protein uL22 from Corynebacterium kroppenstedtii (strain DSM 44385 / JCM 11950 / CIP 105744 / CCUG 35717).